We begin with the raw amino-acid sequence, 330 residues long: Elongation factor Ts (330 aa).

An involved in Mg(2+) ion dislocation from EF-Tu region spans residues 79 to 82; the sequence is TDFV.

It belongs to the EF-Ts family.

Its subcellular location is the cytoplasm. In terms of biological role, associates with the EF-Tu.GDP complex and induces the exchange of GDP to GTP. It remains bound to the aminoacyl-tRNA.EF-Tu.GTP complex up to the GTP hydrolysis stage on the ribosome. This chain is Elongation factor Ts, found in Bacteroides thetaiotaomicron (strain ATCC 29148 / DSM 2079 / JCM 5827 / CCUG 10774 / NCTC 10582 / VPI-5482 / E50).